Reading from the N-terminus, the 274-residue chain is 3-methyl-2-oxobutanoate hydroxymethyltransferase (274 aa).

Positions 44 and 83 each coordinate Mg(2+). Residues 44-45 (DS), D83, and K113 contribute to the 3-methyl-2-oxobutanoate site. Mg(2+) is bound at residue E115. The active-site Proton acceptor is the E182.

It belongs to the PanB family. As to quaternary structure, homodecamer; pentamer of dimers. The cofactor is Mg(2+).

It is found in the cytoplasm. The catalysed reaction is 3-methyl-2-oxobutanoate + (6R)-5,10-methylene-5,6,7,8-tetrahydrofolate + H2O = 2-dehydropantoate + (6S)-5,6,7,8-tetrahydrofolate. It participates in cofactor biosynthesis; (R)-pantothenate biosynthesis; (R)-pantoate from 3-methyl-2-oxobutanoate: step 1/2. Functionally, catalyzes the reversible reaction in which hydroxymethyl group from 5,10-methylenetetrahydrofolate is transferred onto alpha-ketoisovalerate to form ketopantoate. The sequence is that of 3-methyl-2-oxobutanoate hydroxymethyltransferase from Campylobacter jejuni subsp. jejuni serotype O:23/36 (strain 81-176).